Reading from the N-terminus, the 588-residue chain is L-fucose isomerase (588 aa).

Catalysis depends on proton acceptor residues E335 and D359. The Mn(2+) site is built by E335, D359, and H525.

Belongs to the L-fucose isomerase family. Mn(2+) is required as a cofactor.

It localises to the cytoplasm. The catalysed reaction is L-fucose = L-fuculose. The protein operates within carbohydrate degradation; L-fucose degradation; L-lactaldehyde and glycerone phosphate from L-fucose: step 1/3. In terms of biological role, converts the aldose L-fucose into the corresponding ketose L-fuculose. This chain is L-fucose isomerase, found in Streptococcus pneumoniae (strain Hungary19A-6).